The following is a 324-amino-acid chain: Mevalonate-3-kinase (324 aa).

A substrate-binding site is contributed by L19. Position 109 to 112 (S109 to S112) interacts with ATP. Positions 145 and 149 each coordinate substrate. R190 and S193 together coordinate ATP.

Belongs to the GHMP kinase family. In terms of assembly, homodimer.

The catalysed reaction is (R)-mevalonate + ATP = (R)-3-phosphomevalonate + ADP + H(+). Its pathway is isoprenoid biosynthesis; isopentenyl diphosphate biosynthesis via mevalonate pathway. Functionally, catalyzes the phosphorylation of mevalonate (MVA) to yield mevalonate-3-phosphate. Functions in an alternative mevalonate pathway, which passes through mevalonate 3-phosphate rather than mevalonate 5-phosphate. Also able to catalyze the formation of isobutene via the conversion of 3-hydroxyisovalerate (3-HIV) to an unstable 3-phosphate intermediate that undergoes a spontaneous decarboxylation. The sequence is that of Mevalonate-3-kinase from Picrophilus torridus (strain ATCC 700027 / DSM 9790 / JCM 10055 / NBRC 100828 / KAW 2/3).